A 101-amino-acid chain; its full sequence is Large ribosomal subunit protein eL21 (101 aa).

Basic residues predominate over residues 1 to 18 (MVKHSRGYRTRSRSLLRK). The segment at 1–23 (MVKHSRGYRTRSRSLLRKSPRER) is disordered.

Belongs to the eukaryotic ribosomal protein eL21 family.

This is Large ribosomal subunit protein eL21 from Saccharolobus islandicus (strain Y.G.57.14 / Yellowstone #1) (Sulfolobus islandicus).